A 176-amino-acid polypeptide reads, in one-letter code: MSTPARDPNTAGTAALSPFSTPNHELRAPGPGEAHSPFTPTAAPGSQPAGSLSDPEDGPDPTFNFYIQGHRRRPYDRQNRFGKLESEIRETKSQLETLRQELKHLQADVDDLKETVYAAGTSTASTSVPPSQPNSPTPTATTPEASPAAPTTESTETTGPSVATNATEPSESRPAR.

Disordered stretches follow at residues 1-85 (MSTP…GKLE) and 116-176 (VYAA…RPAR). A compositionally biased stretch (basic and acidic residues) spans 75–85 (YDRQNRFGKLE). A coiled-coil region spans residues 76-119 (DRQNRFGKLESEIRETKSQLETLRQELKHLQADVDDLKETVYAA). Over residues 137–161 (TPTATTPEASPAAPTTESTETTGPS) the composition is skewed to low complexity.

Interacts with VP1.

The protein localises to the virion. It localises to the host nucleus. The chain is Avian agnoprotein 1a from Budgerigar fledgling disease virus (BFPyV).